Reading from the N-terminus, the 1182-residue chain is DNA-directed RNA polymerase subunit beta (1182 aa).

Positions 1150-1162 (DEEVEMKDEDDDN) are enriched in acidic residues. The disordered stretch occupies residues 1150–1182 (DEEVEMKDEDDDNIPNATSALEQVVQPTVTEEE). Residues 1171-1182 (EQVVQPTVTEEE) are compositionally biased toward low complexity.

The protein belongs to the RNA polymerase beta chain family. The RNAP catalytic core consists of 2 alpha, 1 beta, 1 beta' and 1 omega subunit. When a sigma factor is associated with the core the holoenzyme is formed, which can initiate transcription.

The catalysed reaction is RNA(n) + a ribonucleoside 5'-triphosphate = RNA(n+1) + diphosphate. In terms of biological role, DNA-dependent RNA polymerase catalyzes the transcription of DNA into RNA using the four ribonucleoside triphosphates as substrates. This chain is DNA-directed RNA polymerase subunit beta, found in Exiguobacterium sp. (strain ATCC BAA-1283 / AT1b).